We begin with the raw amino-acid sequence, 319 residues long: Ribosomal RNA small subunit methyltransferase H (319 aa).

Residues 37 to 39 (GGY), aspartate 57, phenylalanine 96, aspartate 105, and glutamine 112 each bind S-adenosyl-L-methionine. A compositionally biased stretch (basic and acidic residues) spans 292–302 (RPDEREKERNP). Residues 292 to 319 (RPDEREKERNPRSRSARLRAVEKQGVPA) are disordered.

This sequence belongs to the methyltransferase superfamily. RsmH family.

Its subcellular location is the cytoplasm. It catalyses the reaction cytidine(1402) in 16S rRNA + S-adenosyl-L-methionine = N(4)-methylcytidine(1402) in 16S rRNA + S-adenosyl-L-homocysteine + H(+). Functionally, specifically methylates the N4 position of cytidine in position 1402 (C1402) of 16S rRNA. In Syntrophobacter fumaroxidans (strain DSM 10017 / MPOB), this protein is Ribosomal RNA small subunit methyltransferase H.